Reading from the N-terminus, the 266-residue chain is Phosphate import ATP-binding protein PstB (266 aa).

Residues 15-261 enclose the ABC transporter domain; that stretch reads VQKSVVNKLN…PKNKQTEDYI (247 aa). Position 50-57 (50-57) interacts with ATP; it reads GPSGCGKS.

It belongs to the ABC transporter superfamily. Phosphate importer (TC 3.A.1.7) family. The complex is composed of two ATP-binding proteins (PstB), two transmembrane proteins (PstC and PstA) and a solute-binding protein (PstS).

The protein localises to the cell inner membrane. The catalysed reaction is phosphate(out) + ATP + H2O = ADP + 2 phosphate(in) + H(+). Part of the ABC transporter complex PstSACB involved in phosphate import. Responsible for energy coupling to the transport system. The polypeptide is Phosphate import ATP-binding protein PstB (Nitrosomonas europaea (strain ATCC 19718 / CIP 103999 / KCTC 2705 / NBRC 14298)).